We begin with the raw amino-acid sequence, 271 residues long: Phosphate import ATP-binding protein PstB 2 (271 aa).

The region spanning 25–266 (MATEDLHVYY…PQEKQTEDYI (242 aa)) is the ABC transporter domain. 57–64 (GPSGCGKS) provides a ligand contact to ATP.

It belongs to the ABC transporter superfamily. Phosphate importer (TC 3.A.1.7) family. As to quaternary structure, the complex is composed of two ATP-binding proteins (PstB), two transmembrane proteins (PstC and PstA) and a solute-binding protein (PstS).

It is found in the cell membrane. It catalyses the reaction phosphate(out) + ATP + H2O = ADP + 2 phosphate(in) + H(+). Functionally, part of the ABC transporter complex PstSACB involved in phosphate import. Responsible for energy coupling to the transport system. This is Phosphate import ATP-binding protein PstB 2 from Listeria monocytogenes serovar 1/2a (strain ATCC BAA-679 / EGD-e).